A 119-amino-acid chain; its full sequence is Toxin ICK-11 (119 aa).

Positions 1–19 are cleaved as a signal peptide; it reads MMKLYSLVIIATLAAAAFA. 4 disulfides stabilise this stretch: C59–C74, C67–C80, C71–C116, and C73–C87.

This sequence belongs to the neurotoxin 25 family. ICK-8 subfamily. As to expression, expressed by the venom gland.

It localises to the secreted. Functionally, ion channel inhibitor. The protein is Toxin ICK-11 of Trittame loki (Brush-footed trapdoor spider).